Here is a 396-residue protein sequence, read N- to C-terminus: Ribose-phosphate pyrophosphokinase 1, chloroplastic (396 aa).

A chloroplast-targeting transit peptide spans 1-36 (MPLSYSAAAAAAPSPLAARSRGLLRRPPRSSPVVVR). Residues aspartate 204, histidine 206, aspartate 215, and aspartate 219 each coordinate Mg(2+). The binding of phosphoribosylpyrophosphate stretch occupies residues 290–305 (GKVAVMMDDMIDTAGT).

It belongs to the ribose-phosphate pyrophosphokinase family. It depends on Mg(2+) as a cofactor.

It localises to the plastid. The protein resides in the chloroplast. The catalysed reaction is D-ribose 5-phosphate + ATP = 5-phospho-alpha-D-ribose 1-diphosphate + AMP + H(+). The chain is Ribose-phosphate pyrophosphokinase 1, chloroplastic from Oryza sativa subsp. japonica (Rice).